The following is a 503-amino-acid chain: 2-phosphoxylose phosphatase 1 (503 aa).

The Cytoplasmic portion of the chain corresponds to 1–6; it reads MLARSR. Residues 7–27 form a helical; Signal-anchor for type II membrane protein membrane-spanning segment; sequence FILVLVVGALLAVLSFSLQYL. The Lumenal segment spans residues 28–503; the sequence is HLIPTNPVAE…YQQACHQTVL (476 aa). The interval 38–63 is disordered; it reads QRSAGRSRKRVNPVLHTDPPAPDPIR. Asn-73 is a glycosylation site (N-linked (GlcNAc...) asparagine). The active-site Nucleophile is His-98. N-linked (GlcNAc...) asparagine glycosylation occurs at Asn-365. Asp-396 functions as the Proton donor in the catalytic mechanism. An N-linked (GlcNAc...) asparagine glycan is attached at Asn-490.

The protein belongs to the histidine acid phosphatase family.

The protein localises to the golgi apparatus membrane. The enzyme catalyses 3-O-[beta-D-GlcA-(1-&gt;3)-beta-D-Gal-(1-&gt;3)-beta-D-Gal-(1-&gt;4)-beta-D-2-O-P-Xyl]-L-seryl-[protein] + H2O = 3-O-(beta-D-GlcA-(1-&gt;3)-beta-D-Gal-(1-&gt;3)-beta-D-Gal-(1-&gt;4)-beta-D-Xyl)-L-seryl-[protein] + phosphate. Functionally, responsible for the 2-O-dephosphorylation of xylose in the glycosaminoglycan-protein linkage region of proteoglycans thereby regulating the amount of mature glycosaminoglycan (GAG) chains. Sulfated glycosaminoglycans (GAGs), including heparan sulfate and chondroitin sulfate, are synthesized on the so-called common GAG-protein linkage region (GlcUAbeta1-3Galbeta1-3Galbeta1-4Xylbeta1-O-Ser) of core proteins, which is formed by the stepwise addition of monosaccharide residues by the respective specific glycosyltransferases. This is 2-phosphoxylose phosphatase 1 from Danio rerio (Zebrafish).